The following is a 56-amino-acid chain: Large ribosomal subunit protein bL32 (56 aa).

The tract at residues 1–35 is disordered; it reads MAVQQNKPTRSKRGMRRSHDALTATHVSVDKTSGE.

This sequence belongs to the bacterial ribosomal protein bL32 family.

In Proteus mirabilis (strain HI4320), this protein is Large ribosomal subunit protein bL32.